A 360-amino-acid chain; its full sequence is DNA integrity scanning protein DisA (360 aa).

One can recognise a DAC domain in the interval 11-149; that stretch reads ELDLSSILQF…ENMKYTLKDI (139 aa). Residues G78, L96, and 109-113 contribute to the ATP site; that span reads MRHRT.

Belongs to the DisA family. Homooligomer. Interacts with RadA. Mg(2+) serves as cofactor.

The protein resides in the cytoplasm. The catalysed reaction is 2 ATP = 3',3'-c-di-AMP + 2 diphosphate. Diadenylate cyclase (DAC) activity is inhibited 2-fold by Holliday junction (HJ) DNA, further addition of RecG inhibits DAC activity 11-fold; RecG may relocate DisA from the HJ. DAC is inhibited by the interaction with RadA. Diadenylate cyclase activity is not affected by ssDNA or dsDNA, but three- and four-way junctions strongly inhibit the activity of DisA, suggesting the enzyme is regulated by branched nucleic acids. Participates in a DNA-damage check-point that is active prior to asymmetric division when DNA is damaged. Forms globular foci that rapidly scan along the chromosomes during sporulation, searching for lesions. Its ability to scan through the chromosome rapidly is due to its non-specific DNA-binding. When a lesion is present, DisA pauses at the lesion site. This triggers a cellular response that culminates in a temporary block in sporulation initiation. It is required, at least partially, to inhibit the activity of the transcription factor spo0A, which controls, among others, early sporulation genes. In B.subtilis c-di-AMP is a second messenger that mediates growth, DNA repair and cell wall homeostasis; it is toxic when present in excess. Limits the replication fork reggression activity of RecG; DisA inhibits the ATPase activity of RecG. By limiting RecG-mediated fork regression, DisA provides time for removal of potentially lethal DNA lesions. In terms of biological role, one of 3 paralogous diadenylate cyclases (DAC) in this bacteria. Has diadenylate cyclase activity, catalyzing the condensation of 2 ATP molecules into cyclic di-AMP (c-di-AMP). c-di-AMP acts as a signaling molecule that couples DNA integrity with progression of sporulation. The rise in c-di-AMP level generated by DisA while scanning the chromosome operates as a positive signal that advances sporulation; upon encountering a lesion, the DisA focus arrests at the damaged site and halts c-di-AMP synthesis. Does not convert GTP to c-di-GMP. The chain is DNA integrity scanning protein DisA from Bacillus subtilis (strain 168).